A 317-amino-acid chain; its full sequence is Apolipoprotein E (317 aa).

An N-terminal signal peptide occupies residues 1 to 18 (MKVLWAALLVTFLAGCQA). Repeat copies occupy residues 80–101 (ALMD…EQLT), 102–123 (PVAE…ARLG), 124–145 (ADME…AMLG), 146–167 (QSTE…KRLL), 168–189 (RDAD…EGAE), 190–211 (RGVS…VRAA), 212–233 (TVGS…ERLR), and 234–255 (ARME…EQVA). The interval 80–255 (ALMDETMKEL…RLDEVKEQVA (176 aa)) is 8 X 22 AA approximate tandem repeats. The residue at position 143 (methionine 143) is a Methionine sulfoxide. Serine 147 carries the post-translational modification Phosphoserine. The LDL and other lipoprotein receptors binding stretch occupies residues 158-168 (HLRKLRKRLLR). 162 to 165 (LRKR) provides a ligand contact to heparin. A lipid-binding and lipoprotein association region spans residues 210-290 (AATVGSLAGQ…SWFEPLVEDM (81 aa)). Residue 229-236 (GERLRARM) coordinates heparin. The tract at residues 266-317 (QQIRLQAEAFQARLKSWFEPLVEDMQRQWAGLVEKVQAAMGTSAAPVPSDNH) is homooligomerization. The specificity for association with VLDL stretch occupies residues 278–290 (RLKSWFEPLVEDM).

Belongs to the apolipoprotein A1/A4/E family. Homotetramer. May interact with ABCA1; functionally associated with ABCA1 in the biogenesis of HDLs. May interact with APP/A4 amyloid-beta peptide; the interaction is extremely stable in vitro but its physiological significance is unclear. May interact with MAPT. May interact with MAP2. In the cerebrospinal fluid, interacts with secreted SORL1. Interacts with PMEL; this allows the loading of PMEL luminal fragment on ILVs to induce fibril nucleation. Post-translationally, APOE exists as multiple glycosylated and sialylated glycoforms within cells and in plasma. The extent of glycosylation and sialylation are tissue and context specific. Glycated in plasma VLDL. In terms of processing, phosphorylated by FAM20C in the extracellular medium.

It localises to the secreted. The protein localises to the extracellular space. It is found in the extracellular matrix. Its subcellular location is the extracellular vesicle. The protein resides in the endosome. It localises to the multivesicular body. APOE is an apolipoprotein, a protein associating with lipid particles, that mainly functions in lipoprotein-mediated lipid transport between organs via the plasma and interstitial fluids. APOE is a core component of plasma lipoproteins and is involved in their production, conversion and clearance. Apolipoproteins are amphipathic molecules that interact both with lipids of the lipoprotein particle core and the aqueous environment of the plasma. As such, APOE associates with chylomicrons, chylomicron remnants, very low density lipoproteins (VLDL) and intermediate density lipoproteins (IDL) but shows a preferential binding to high-density lipoproteins (HDL). It also binds a wide range of cellular receptors including the LDL receptor/LDLR, the LDL receptor-related proteins LRP1, LRP2 and LRP8 and the very low-density lipoprotein receptor/VLDLR that mediate the cellular uptake of the APOE-containing lipoprotein particles. Finally, APOE also has a heparin-binding activity and binds heparan-sulfate proteoglycans on the surface of cells, a property that supports the capture and the receptor-mediated uptake of APOE-containing lipoproteins by cells. A main function of APOE is to mediate lipoprotein clearance through the uptake of chylomicrons, VLDLs, and HDLs by hepatocytes. APOE is also involved in the biosynthesis by the liver of VLDLs as well as their uptake by peripheral tissues ensuring the delivery of triglycerides and energy storage in muscle, heart and adipose tissues. By participating in the lipoprotein-mediated distribution of lipids among tissues, APOE plays a critical role in plasma and tissues lipid homeostasis. APOE is also involved in two steps of reverse cholesterol transport, the HDLs-mediated transport of cholesterol from peripheral tissues to the liver, and thereby plays an important role in cholesterol homeostasis. First, it is functionally associated with ABCA1 in the biogenesis of HDLs in tissues. Second, it is enriched in circulating HDLs and mediates their uptake by hepatocytes. APOE also plays an important role in lipid transport in the central nervous system, regulating neuron survival and sprouting. The chain is Apolipoprotein E (APOE) from Pan troglodytes (Chimpanzee).